The chain runs to 170 residues: Probable T4-type lysozyme 1 (170 aa).

Catalysis depends on Glu-13, which acts as the Proton donor. Asp-22 (nucleophile) is an active-site residue.

The protein belongs to the glycosyl hydrolase 24 family.

It carries out the reaction Hydrolysis of (1-&gt;4)-beta-linkages between N-acetylmuramic acid and N-acetyl-D-glucosamine residues in a peptidoglycan and between N-acetyl-D-glucosamine residues in chitodextrins.. This is Probable T4-type lysozyme 1 from Dictyostelium discoideum (Social amoeba).